We begin with the raw amino-acid sequence, 505 residues long: Exoglucanase 1 (505 aa).

Residues 1–17 (MYRKLAVISAFLAAARA) form the signal peptide. A Pyrrolidone carboxylic acid modification is found at glutamine 18. The catalytic stretch occupies residues 18–449 (QQVCTQQAET…GSTGGNTGSN (432 aa)). Disulfide bonds link cysteine 21–cysteine 88, cysteine 36–cysteine 41, cysteine 66–cysteine 87, and cysteine 77–cysteine 83. N-linked (GlcNAc...) asparagine glycans are attached at residues asparagine 93 and asparagine 126. 6 disulfides stabilise this stretch: cysteine 151–cysteine 410, cysteine 185–cysteine 223, cysteine 189–cysteine 222, cysteine 243–cysteine 269, cysteine 251–cysteine 256, and cysteine 274–cysteine 344. The active-site Nucleophile is the glutamate 225. Glutamate 230 functions as the Proton donor/acceptor in the catalytic mechanism. Asparagine 283 and asparagine 397 each carry an N-linked (GlcNAc...) asparagine glycan. 2 disordered regions span residues 399 to 423 (TAST…VEAQ) and 440 to 472 (GSTG…ATQT). A compositionally biased stretch (polar residues) spans 409-423 (SCSTSSGVPAQVEAQ). Low complexity predominate over residues 447-470 (GSNPPGTSTTRAPPSSTGSSPTAT). Residues 450 to 468 (PPGTSTTRAPPSSTGSSPT) form a linker region. The 37-residue stretch at 469 to 505 (ATQTHYGQCGGTGWTGPTRCASGYTCQVLNPFYSQCL) folds into the CBM1 domain.

It belongs to the glycosyl hydrolase 7 (cellulase C) family. In terms of processing, O-glycosylated. O-glycosylation of the cellulase linker provides protection from proteolysis. Linker glycans also contribute to binding affinity of cellobiohydrolases to cellulose.

The protein localises to the secreted. The enzyme catalyses Hydrolysis of (1-&gt;4)-beta-D-glucosidic linkages in cellulose and cellotetraose, releasing cellobiose from the non-reducing ends of the chains.. Its function is as follows. Exocellobiohydrolases (CBH) that catalyzes the hydrolysis of 1,4-beta-D-glucosidic bonds in cellulose to release the disaccharide cellobiose. The degradation of cellulose involves an interplay between different cellulolytic enzymes. Hydrolysis starts with endoglucanases (EGs), which cut internal beta-1,4-glucosidic bonds in cellulose to reduce the polymerization degree of the substrate and create new chain ends for exocellobiohydrolases (CBHs). The CBHs release the disaccharide cellobiose from the non-reducing end of the cellulose polymer chain. Finally, beta-1,4-glucosidases hydrolyze the cellobiose and other short cello-oligosaccharides into glucose units. This chain is Exoglucanase 1 (cbh1), found in Trichoderma harzianum (Hypocrea lixii).